A 1143-amino-acid chain; its full sequence is Disease resistance protein Pik-1 (1143 aa).

Residues 1–190 are structured coiled coil (CC) domain; that stretch reads MEAAAMAVTA…PLRIMGGEMQ (190 aa). In terms of domain architecture, HMA spans 189–258; the sequence is MQKIVFKIPM…KVGHAELLQV (70 aa). The HMA-like domain stretch occupies residues 191–264; it reads KIVFKIPMVD…LLQVSQVKED (74 aa). An NB-ARC domain is found at 282-570; the sequence is HEVKTICILG…WIAEGFVSEE (289 aa). LRR repeat units lie at residues 681-706, 708-731, 732-754, 756-777, 778-800, 802-823, 824-848, 945-968, 979-1002, and 1004-1027; these read FKRL…ICEQ, SLRV…MRKL, KHLE…IGEL, HLRI…IREL, QHLH…VGKL, NLKI…IGEL, NHLQ…QISQ, MPNL…INGT, DSRL…EFKF, and AGPA…VFRC.

The protein belongs to the disease resistance NB-LRR family. As to quaternary structure, interacts with AVR-Pik through its N-terminal part containing the HMA-like domain.

Disease resistance (R) protein that specifically recognizes the AVR-Pik effector avirulence protein from M.oryzae. Resistance proteins guard the plant against pathogens that contain an appropriate avirulence protein via an indirect interaction with this avirulence protein. That triggers a defense system including the hypersensitive response, which restricts the pathogen growth. Contribution of Pik-2 is required to recognize the effector avirulence protein AVR-Pik. The polypeptide is Disease resistance protein Pik-1 (Oryza sativa subsp. japonica (Rice)).